A 141-amino-acid chain; its full sequence is Hemoglobin subunit mu (141 aa).

Positions 1-141 constitute a Globin domain; it reads MLSAQERAQI…VAVVLTEKYR (141 aa). His58 and His87 together coordinate heme b.

Belongs to the globin family. In terms of tissue distribution, expressed in erythroid tissues.

This Homo sapiens (Human) protein is Hemoglobin subunit mu (HBM).